The following is a 549-amino-acid chain: Glucose-6-phosphate isomerase (549 aa).

The Proton donor role is filled by Glu-355. Residues His-386 and Lys-514 contribute to the active site.

The protein belongs to the GPI family.

It is found in the cytoplasm. The catalysed reaction is alpha-D-glucose 6-phosphate = beta-D-fructose 6-phosphate. It participates in carbohydrate biosynthesis; gluconeogenesis. The protein operates within carbohydrate degradation; glycolysis; D-glyceraldehyde 3-phosphate and glycerone phosphate from D-glucose: step 2/4. Functionally, catalyzes the reversible isomerization of glucose-6-phosphate to fructose-6-phosphate. The protein is Glucose-6-phosphate isomerase of Enterobacter sp. (strain 638).